Consider the following 183-residue polypeptide: Adenine phosphoribosyltransferase (183 aa).

It belongs to the purine/pyrimidine phosphoribosyltransferase family. Homodimer.

The protein resides in the cytoplasm. It carries out the reaction AMP + diphosphate = 5-phospho-alpha-D-ribose 1-diphosphate + adenine. It functions in the pathway purine metabolism; AMP biosynthesis via salvage pathway; AMP from adenine: step 1/1. In terms of biological role, catalyzes a salvage reaction resulting in the formation of AMP, that is energically less costly than de novo synthesis. The sequence is that of Adenine phosphoribosyltransferase from Cronobacter sakazakii (strain ATCC BAA-894) (Enterobacter sakazakii).